Reading from the N-terminus, the 258-residue chain is Deoxyribose-phosphate aldolase (258 aa).

Asp102 (proton donor/acceptor) is an active-site residue. The Schiff-base intermediate with acetaldehyde role is filled by Lys165. The active-site Proton donor/acceptor is the Lys199.

Belongs to the DeoC/FbaB aldolase family. DeoC type 2 subfamily.

It localises to the cytoplasm. The enzyme catalyses 2-deoxy-D-ribose 5-phosphate = D-glyceraldehyde 3-phosphate + acetaldehyde. The protein operates within carbohydrate degradation; 2-deoxy-D-ribose 1-phosphate degradation; D-glyceraldehyde 3-phosphate and acetaldehyde from 2-deoxy-alpha-D-ribose 1-phosphate: step 2/2. Its function is as follows. Catalyzes a reversible aldol reaction between acetaldehyde and D-glyceraldehyde 3-phosphate to generate 2-deoxy-D-ribose 5-phosphate. The chain is Deoxyribose-phosphate aldolase from Vibrio parahaemolyticus serotype O3:K6 (strain RIMD 2210633).